We begin with the raw amino-acid sequence, 103 residues long: Small ribosomal subunit protein uS10 (103 aa).

The protein belongs to the universal ribosomal protein uS10 family. Part of the 30S ribosomal subunit.

Functionally, involved in the binding of tRNA to the ribosomes. This Blochmanniella pennsylvanica (strain BPEN) protein is Small ribosomal subunit protein uS10.